The primary structure comprises 349 residues: Lipoyl synthase (349 aa).

Residues C55, C60, C66, C81, C85, C88, and S292 each coordinate [4Fe-4S] cluster. A Radical SAM core domain is found at W67–K281. A disordered region spans residues L321 to R349.

It belongs to the radical SAM superfamily. Lipoyl synthase family. [4Fe-4S] cluster serves as cofactor.

Its subcellular location is the cytoplasm. It carries out the reaction [[Fe-S] cluster scaffold protein carrying a second [4Fe-4S](2+) cluster] + N(6)-octanoyl-L-lysyl-[protein] + 2 oxidized [2Fe-2S]-[ferredoxin] + 2 S-adenosyl-L-methionine + 4 H(+) = [[Fe-S] cluster scaffold protein] + N(6)-[(R)-dihydrolipoyl]-L-lysyl-[protein] + 4 Fe(3+) + 2 hydrogen sulfide + 2 5'-deoxyadenosine + 2 L-methionine + 2 reduced [2Fe-2S]-[ferredoxin]. The protein operates within protein modification; protein lipoylation via endogenous pathway; protein N(6)-(lipoyl)lysine from octanoyl-[acyl-carrier-protein]: step 2/2. In terms of biological role, catalyzes the radical-mediated insertion of two sulfur atoms into the C-6 and C-8 positions of the octanoyl moiety bound to the lipoyl domains of lipoate-dependent enzymes, thereby converting the octanoylated domains into lipoylated derivatives. This chain is Lipoyl synthase, found in Corynebacterium jeikeium (strain K411).